Consider the following 219-residue polypeptide: Tetratricopeptide repeat protein 9A (219 aa).

A disordered region spans residues 1 to 49; it reads MERKGLAARSSGNPSPPALGEGPRPVPPPCVPSGGGAPERGQAGTAAEP. One copy of the TPR 1 repeat lies at 56 to 89; the sequence is AHEFKSQGAQCYKDKKFREAIGKYHRALLELKGL. The tract at residues 94–115 is disordered; sequence EERDARPASSAGVPKSSRLSEE. The residue at position 102 (Ser102) is a Phosphoserine. TPR repeat units follow at residues 125-160 and 161-194; these read IDCY…EGEN and FKAL…QPTD.

It belongs to the TTC9 family.

This is Tetratricopeptide repeat protein 9A (Ttc9) from Mus musculus (Mouse).